Reading from the N-terminus, the 339-residue chain is Phenylalanine--tRNA ligase alpha subunit (339 aa).

E254 is a Mg(2+) binding site.

This sequence belongs to the class-II aminoacyl-tRNA synthetase family. Phe-tRNA synthetase alpha subunit type 1 subfamily. In terms of assembly, tetramer of two alpha and two beta subunits. Requires Mg(2+) as cofactor.

It is found in the cytoplasm. It carries out the reaction tRNA(Phe) + L-phenylalanine + ATP = L-phenylalanyl-tRNA(Phe) + AMP + diphosphate + H(+). This is Phenylalanine--tRNA ligase alpha subunit (pheS) from Chlamydia pneumoniae (Chlamydophila pneumoniae).